The following is a 335-amino-acid chain: Nucleoid-associated protein YejK (335 aa).

It belongs to the YejK family.

It localises to the cytoplasm. Its subcellular location is the nucleoid. This Salmonella schwarzengrund (strain CVM19633) protein is Nucleoid-associated protein YejK.